We begin with the raw amino-acid sequence, 645 residues long: Sentrin-specific protease 1 (645 aa).

The tract at residues 1–200 (MDDIADRMRM…REIYRQLLQM (200 aa)) is interaction with CCAR2. A phosphoserine mark is found at S57, S117, and S157. Positions 92–117 (QSANGQWRNSTPSSSSSLQKSRNSRS) are disordered. Over residues 99–117 (RNSTPSSSSSLQKSRNSRS) the composition is skewed to low complexity. The Nuclear localization signal signature appears at 171-177 (PKKTQRR). The interval 285–313 (KDSGTLHHPHHHHSVPHQPDNLAASNTQS) is disordered. 2 protease regions span residues 451-614 (LTIT…YADC) and 451-615 (LTIT…ADCI). Catalysis depends on residues H534 and D551. A Nuclear localization signal motif is present at residues 575–578 (KKRK). C604 acts as the Nucleophile in catalysis. The short motif at 629–635 (PYFRKRM) is the Nuclear localization signal element. The short motif at 636 to 645 (VWEILHRKLL) is the Nuclear export signal element.

It belongs to the peptidase C48 family. In terms of assembly, interacts with RBM33; promoting ALKBH5 desumoylation and subsequent activation.

Its subcellular location is the nucleus. It is found in the cytoplasm. Protease that catalyzes two essential functions in the SUMO pathway. The first is the hydrolysis of an alpha-linked peptide bond at the C-terminal end of the small ubiquitin-like modifier (SUMO) propeptides, SUMO1, SUMO2 and SUMO3 leading to the mature form of the proteins. The second is the deconjugation of SUMO1, SUMO2 and SUMO3 from targeted proteins, by cleaving an epsilon-linked peptide bond between the C-terminal glycine of the mature SUMO and the lysine epsilon-amino group of the target protein. Deconjugates SUMO1 from HIPK2. Deconjugates SUMO1 from HDAC1 and BHLHE40/DEC1, which decreases its transcriptional repression activity. Deconjugates SUMO1 from CLOCK, which decreases its transcriptional activation activity. Deconjugates SUMO2 from MTA1. Inhibits N(6)-methyladenosine (m6A) RNA methylation by mediating SUMO1 deconjugation from METTL3 and ALKBH5: METTL3 inhibits the m6A RNA methyltransferase activity, while ALKBH5 desumoylation promotes m6A demethylation. Desumoylates CCAR2 which decreases its interaction with SIRT1. Deconjugates SUMO1 from GPS2. The sequence is that of Sentrin-specific protease 1 (SENP1) from Pongo abelii (Sumatran orangutan).